The chain runs to 247 residues: Ribonuclease PH (247 aa).

Residues Arg96 and 134–136 (GTR) contribute to the phosphate site.

Belongs to the RNase PH family. In terms of assembly, homohexameric ring arranged as a trimer of dimers.

The enzyme catalyses tRNA(n+1) + phosphate = tRNA(n) + a ribonucleoside 5'-diphosphate. Its function is as follows. Phosphorolytic 3'-5' exoribonuclease that plays an important role in tRNA 3'-end maturation. Removes nucleotide residues following the 3'-CCA terminus of tRNAs; can also add nucleotides to the ends of RNA molecules by using nucleoside diphosphates as substrates, but this may not be physiologically important. Probably plays a role in initiation of 16S rRNA degradation (leading to ribosome degradation) during starvation. The polypeptide is Ribonuclease PH (Tropheryma whipplei (strain TW08/27) (Whipple's bacillus)).